Consider the following 383-residue polypeptide: Presenilin-associated rhomboid-like protein A, mitochondrial (383 aa).

A mitochondrion-targeting transit peptide spans 1–37 (MAWRSCFMKWTQINSINASSLCPKSTRLNIHPQQRCG). A disordered region spans residues 35–75 (RCGFRKTERPSESKKGVQETEAEAGGHNRAVPPKPVPPLPP). The Mitochondrial matrix segment spans residues 38-83 (FRKTERPSESKKGVQETEAEAGGHNRAVPPKPVPPLPPRRPHQLFR). The segment covering 39 to 52 (RKTERPSESKKGVQ) has biased composition (basic and acidic residues). Positions 66-75 (PPKPVPPLPP) are enriched in pro residues. Residues 84–104 (PLVFTVGFTGCSFGAAAILQY) traverse the membrane as a helical segment. Topologically, residues 105–168 (ESVKSRVQLA…FWSGLSEGQK (64 aa)) are mitochondrial intermembrane. Residues 169–189 (TVTGIIALNTVVLCCWRVPAM) form a helical membrane-spanning segment. At 190-219 (QRFLVKYFTSNPASKTRCLPMVLSSFSHYS) the chain is on the mitochondrial matrix side. A helical membrane pass occupies residues 220–240 (VIHMVVNMYVLWTFSSSIVSL). Over 241 to 245 (LGREQ) the chain is Mitochondrial intermembrane. A helical transmembrane segment spans residues 246–266 (FLALYLSGGVISTFVSYVFKT). At 267 to 271 (ATGRL) the chain is on the mitochondrial matrix side. A helical transmembrane segment spans residues 272 to 292 (GPSLGASGSIMTVLAAVCTKI). The Nucleophile role is filled by S278. Residues 293–298 (PEAKLG) lie on the Mitochondrial intermembrane side of the membrane. A helical transmembrane segment spans residues 299–319 (IVLLPVISFSAGNALKALVAL). The Mitochondrial matrix portion of the chain corresponds to 320–334 (DIAGLVLGWRFFDHA). Residues 335 to 355 (AHLGGALFGVWYIGYGHELIW) traverse the membrane as a helical segment. Residue H336 is part of the active site. Residues 356 to 383 (RKREPLIKFWHELRNMSPGRPGPGGGGG) are Mitochondrial intermembrane-facing.

It belongs to the peptidase S54 family.

The protein resides in the mitochondrion inner membrane. The catalysed reaction is Cleaves type-1 transmembrane domains using a catalytic dyad composed of serine and histidine that are contributed by different transmembrane domains.. In terms of biological role, required for the control of apoptosis during postnatal growth. Essential for proteolytic processing of an antiapoptotic form of opa1 which prevents the release of mitochondrial cytochrome c in response to intrinsic apoptotic signals. The polypeptide is Presenilin-associated rhomboid-like protein A, mitochondrial (parla) (Danio rerio (Zebrafish)).